Consider the following 394-residue polypeptide: Choline/ethanolamine kinase (394 aa).

An N-acetylalanine modification is found at alanine 2. The disordered stretch occupies residues 22–42; it reads GLLDAKCPEPIPNRRRSSSLS. ATP contacts are provided by residues 75–81, arginine 104, 146–152, glutamine 244, and aspartate 264; these read SGGLSNL and QYLPSRP. Substrate is bound at residue 77–79; that stretch reads GLS.

This sequence belongs to the choline/ethanolamine kinase family. As to quaternary structure, homodimer, and heterodimer with CHKA.

It catalyses the reaction choline + ATP = phosphocholine + ADP + H(+). It carries out the reaction ethanolamine + ATP = phosphoethanolamine + ADP + H(+). The protein operates within phospholipid metabolism; phosphatidylethanolamine biosynthesis; phosphatidylethanolamine from ethanolamine: step 1/3. In terms of biological role, has a key role in phospholipid metabolism, and catalyzes the first step of phosphatidylethanolamine and phosphatidylcholine biosynthesis. This Rattus norvegicus (Rat) protein is Choline/ethanolamine kinase (Chkb).